Consider the following 79-residue polypeptide: Small ribosomal subunit protein uS17 (79 aa).

Belongs to the universal ribosomal protein uS17 family. As to quaternary structure, part of the 30S ribosomal subunit.

Functionally, one of the primary rRNA binding proteins, it binds specifically to the 5'-end of 16S ribosomal RNA. The sequence is that of Small ribosomal subunit protein uS17 from Bartonella quintana (strain Toulouse) (Rochalimaea quintana).